We begin with the raw amino-acid sequence, 1079 residues long: Integrator complex subunit 3 homolog (1079 aa).

Disordered regions lie at residues Glu-544–Pro-574, Tyr-925–Ala-949, and Ala-1010–Asp-1079. Low complexity predominate over residues Lys-938–Ala-949. Phosphoserine occurs at positions 1049, 1050, 1054, and 1055. Residues His-1062–Lys-1073 are compositionally biased toward basic residues.

It belongs to the Integrator subunit 3 family. In terms of assembly, belongs to the multiprotein complex Integrator, at least composed of IntS1, IntS2, IntS3, IntS4, omd/IntS5, IntS6, defl/IntS7, IntS8, IntS9, IntS10, IntS11, IntS12, asun/IntS13, IntS14 and IntS15. The core complex associates with protein phosphatase 2A subunits mts/PP2A and Pp2A-29B, to form the Integrator-PP2A (INTAC) complex.

The protein resides in the nucleus. It is found in the cytoplasm. Functionally, component of the integrator complex, a multiprotein complex that terminates RNA polymerase II (Pol II) transcription in the promoter-proximal region of genes. The integrator complex provides a quality checkpoint during transcription elongation by driving premature transcription termination of transcripts that are unfavorably configured for transcriptional elongation: the complex terminates transcription by (1) catalyzing dephosphorylation of the C-terminal domain (CTD) of Pol II subunit Polr2A/Rbp1 and Spt5, and (2) degrading the exiting nascent RNA transcript via endonuclease activity. The integrator complex is also involved in the 3'-end processing of the U7 snRNA, and also the spliceosomal snRNAs U1, U2, U4 and U5. The polypeptide is Integrator complex subunit 3 homolog (IntS3) (Drosophila mojavensis (Fruit fly)).